The primary structure comprises 79 residues: MSEILPYSDEKMGHYGSDGEVGQISFSCRLQDTSSFFGGNQQKRPPKLGQIGRAKRVVIEDDRIDEVLKGVSDKSPSGV.

An inhibitory domain region spans residues 43 to 69 (KRPPKLGQIGRAKRVVIEDDRIDEVLK).

This sequence belongs to the CAMK2N family.

The protein resides in the nucleus. It is found in the cytoplasm. Its subcellular location is the cytosol. Its function is as follows. Potent and specific cellular inhibitor of CaM-kinase II (CAMK2). Traps Ca(2+)/calmodulin on CAMK2. In Xenopus laevis (African clawed frog), this protein is Calcium/calmodulin-dependent protein kinase II inhibitor 2 (camk2n2).